Reading from the N-terminus, the 549-residue chain is MDEDSKPLLGSVPTGDYYTDSLDPKQRRPFHVEPRNIVGEDVQERVSAEAAVLSSRVHYYSRLTGSSDRLLAPPDHVIPSHEDIYIYSPLGTAFKVQGGDSPIKNPSIVTIFAIWNTMMGTSILSIPWGIKQAGFTLGIIIIVLMGLLTLYCCYRVLKSTKSIPYVDTSDWEFPDVCKYYFGGFGKWSSLVFSLVSLIGAMVVYWVLMSNFLFNTGKFIFNYVHNVNTSDAFGTNGTERVICPYPDVDPHGNSSTSLYSGSDNSTGLEFDHWWSKTNTIPFYLILLLLPLLNFRSASFFARFTFLGTISVIYLIFLVTYKAIQLGFHLEFHWFDSSMFFVPEFRTLFPQLSGVLTLAFFIHNCIITLMKNNKHQENNVRDLSLAYLLVGLTYLYVGVLIFAAFPSPPLSKECIEPNFLDNFPSSDILVFVARTFLLFQMTTVYPLLGYLVRVQLMGQIFGNHYPGFLHVFVLNVFVVGAGVLMARFYPNIGSIIRYSGALCGLALVFVLPSLIHMVSLKRRGELRWTSTLFHGFLILLGVANLLGQFFM.

The tract at residues 1 to 27 (MDEDSKPLLGSVPTGDYYTDSLDPKQR) is disordered. Residues 1-107 (MDEDSKPLLG…GGDSPIKNPS (107 aa)) are Cytoplasmic-facing. A helical transmembrane segment spans residues 108–128 (IVTIFAIWNTMMGTSILSIPW). An important for arginine binding and amino acid transport region spans residues 117–122 (TMMGTS). Ser122 provides a ligand contact to arginine. The Lumenal portion of the chain corresponds to 129 to 134 (GIKQAG). The chain crosses the membrane as a helical span at residues 135–155 (FTLGIIIIVLMGLLTLYCCYR). The Cytoplasmic segment spans residues 156-186 (VLKSTKSIPYVDTSDWEFPDVCKYYFGGFGK). Residues 187–213 (WSSLVFSLVSLIGAMVVYWVLMSNFLF) form a helical membrane-spanning segment. The Lumenal portion of the chain corresponds to 214–271 (NTGKFIFNYVHNVNTSDAFGTNGTERVICPYPDVDPHGNSSTSLYSGSDNSTGLEFDH). N-linked (GlcNAc...) asparagine glycans are attached at residues Asn227, Asn235, Asn252, and Asn263. A disulfide bond links Cys242 and Cys412. A helical membrane pass occupies residues 272–288 (WWSKTNTIPFYLILLLL). At 289-297 (PLLNFRSAS) the chain is on the cytoplasmic side. A helical transmembrane segment spans residues 298-322 (FFARFTFLGTISVIYLIFLVTYKAI). Residues 323–344 (QLGFHLEFHWFDSSMFFVPEFR) are Lumenal-facing. The chain crosses the membrane as a helical span at residues 345–365 (TLFPQLSGVLTLAFFIHNCII). At 366-382 (TLMKNNKHQENNVRDLS) the chain is on the cytoplasmic side. A helical membrane pass occupies residues 383-403 (LAYLLVGLTYLYVGVLIFAAF). Over 404–425 (PSPPLSKECIEPNFLDNFPSSD) the chain is Lumenal. The helical transmembrane segment at 426–446 (ILVFVARTFLLFQMTTVYPLL) threads the bilayer. The CARC motif motif lies at 432–442 (RTFLLFQMTTV). A CRAC motif motif is present at residues 445-451 (LLGYLVR). The Cytoplasmic segment spans residues 447–467 (GYLVRVQLMGQIFGNHYPGFL). A helical transmembrane segment spans residues 468–488 (HVFVLNVFVVGAGVLMARFYP). Residues 489–495 (NIGSIIR) lie on the Lumenal side of the membrane. A helical membrane pass occupies residues 496 to 516 (YSGALCGLALVFVLPSLIHMV). Residues 517–528 (SLKRRGELRWTS) lie on the Cytoplasmic side of the membrane. Residues 529-549 (TLFHGFLILLGVANLLGQFFM) traverse the membrane as a helical segment.

This sequence belongs to the amino acid/polyamine transporter 2 family. SLC38A9 subfamily. As to quaternary structure, associated component of the Ragulator complex. Associated component of the Rag GTPases heterodimers (RRAGA and RRAGC). In terms of processing, glycosylated.

The protein localises to the lysosome membrane. Its subcellular location is the late endosome membrane. It carries out the reaction L-leucine(in) = L-leucine(out). The catalysed reaction is L-tyrosine(in) = L-tyrosine(out). It catalyses the reaction L-glutamine(out) = L-glutamine(in). The enzyme catalyses L-asparagine(out) = L-asparagine(in). With respect to regulation, amino acid transport activity is increased by sodium. Transport of L-glutamine, leucine and tyrosine is increased by arginine binding. Lysosomal amino acid transporter involved in the activation of mTORC1 in response to amino acid levels. Probably acts as an amino acid sensor of the Rag GTPases and Ragulator complexes, 2 complexes involved in amino acid sensing and activation of mTORC1, a signaling complex promoting cell growth in response to growth factors, energy levels, and amino acids. Following activation by amino acids, the Ragulator and Rag GTPases function as a scaffold recruiting mTORC1 to lysosomes where it is in turn activated. SLC38A9 mediates transport of amino acids with low capacity and specificity with a slight preference for polar amino acids. Acts as an arginine sensor. Following activation by arginine binding, mediates transport of L-glutamine, leucine and tyrosine with high efficiency, and is required for the efficient utilization of these amino acids after lysosomal protein degradation. However, the transport mechanism is not well defined and the role of sodium is not clear. Guanine exchange factor (GEF) that, upon arginine binding, stimulates GDP release from RRAGA and therefore activates the Rag GTPase heterodimer and the mTORC1 pathway in response to nutrient sufficiency. The polypeptide is Neutral amino acid transporter 9 (Danio rerio (Zebrafish)).